Here is a 205-residue protein sequence, read N- to C-terminus: Protein-L-isoaspartate O-methyltransferase (205 aa).

Ser-56 is an active-site residue.

Belongs to the methyltransferase superfamily. L-isoaspartyl/D-aspartyl protein methyltransferase family.

The protein resides in the cytoplasm. It carries out the reaction [protein]-L-isoaspartate + S-adenosyl-L-methionine = [protein]-L-isoaspartate alpha-methyl ester + S-adenosyl-L-homocysteine. Functionally, catalyzes the methyl esterification of L-isoaspartyl residues in peptides and proteins that result from spontaneous decomposition of normal L-aspartyl and L-asparaginyl residues. It plays a role in the repair and/or degradation of damaged proteins. This is Protein-L-isoaspartate O-methyltransferase from Aeromonas salmonicida (strain A449).